Consider the following 504-residue polypeptide: UDP-GalNAc:beta-1,3-N-acetylgalactosaminyltransferase 2 (504 aa).

The Cytoplasmic portion of the chain corresponds to Met1–Asn3. Residues Trp4–Leu24 traverse the membrane as a helical; Signal-anchor for type II membrane protein segment. At Arg25 to Arg504 the chain is on the lumenal side. Asn117 and Asn176 each carry an N-linked (GlcNAc...) asparagine glycan.

It belongs to the glycosyltransferase 31 family. N-glycosylated. As to expression, present in testis (at protein level). In testis, it is mainly detected in the middle layers of seminiferous tubules at stages XII to II. Strongly expressed in primary and secondary spermatocytes and early round spermatids, but not in spermatogonia, elongating or elongated spermatids, or in Leydig or Sertoli cells.

It localises to the golgi apparatus membrane. It is found in the endoplasmic reticulum. It carries out the reaction 3-O-(N-acetyl-beta-D-glucosaminyl-(1-&gt;4)-alpha-D-mannosyl)-L-threonyl-[protein] + UDP-N-acetyl-alpha-D-galactosamine = 3-O-[beta-D-GalNAc-(1-&gt;3)-beta-D-GlcNAc-(1-&gt;4)-alpha-D-Man]-L-Thr-[protein] + UDP + H(+). Its pathway is protein modification; protein glycosylation. Beta-1,3-N-acetylgalactosaminyltransferase that synthesizes a unique carbohydrate structure, GalNAc-beta-1-3GlcNAc, on N- and O-glycans. Has no galactose nor galactosaminyl transferase activity toward any acceptor substrate. Involved in alpha-dystroglycan (DAG1) glycosylation: acts coordinately with GTDC2/POMGnT2 to synthesize a GalNAc-beta3-GlcNAc-beta-terminus at the 4-position of protein O-mannose in the biosynthesis of the phosphorylated O-mannosyl trisaccharide (N-acetylgalactosamine-beta-3-N-acetylglucosamine-beta-4-(phosphate-6-)mannose), a carbohydrate structure present in alpha-dystroglycan, which is required for binding laminin G-like domain-containing extracellular proteins with high affinity. This Mus musculus (Mouse) protein is UDP-GalNAc:beta-1,3-N-acetylgalactosaminyltransferase 2 (B3galnt2).